The chain runs to 357 residues: MTERKHGLTYADSGVDIDAGNRLVDLIKPMVRATARAGADSEIGGFGGLFDLKAAGFKDPVLVAATDGVGTKIKVAIDAGLHTGIGIDLVAMSVNDLVVQGAEPLFFLDYFACGKLDPEAAAEIVAGVAEACRESGCALIGGETAEMPGLYKDGDYDLAGFSVGAAERGTLLPSKDIAEGDAVIGLASSGVHSNGFSLVRKIVEKSGLPYDAPAPFSPVMTLGGALLAPTKLYVKSCLQAIRDTGAVKGLAHITGGGFTENIPRVLPKHLGVGIDLPRIPVLPVFKWLAEQGEIAELELLRTFNCGIGMVIIVKADAVDQVTESLTASGESVHLLGQVIAAKGEQRVVYDGHLDLAW.

It belongs to the AIR synthase family.

It is found in the cytoplasm. The catalysed reaction is 2-formamido-N(1)-(5-O-phospho-beta-D-ribosyl)acetamidine + ATP = 5-amino-1-(5-phospho-beta-D-ribosyl)imidazole + ADP + phosphate + H(+). It participates in purine metabolism; IMP biosynthesis via de novo pathway; 5-amino-1-(5-phospho-D-ribosyl)imidazole from N(2)-formyl-N(1)-(5-phospho-D-ribosyl)glycinamide: step 2/2. This Rhodopseudomonas palustris (strain ATCC BAA-98 / CGA009) protein is Phosphoribosylformylglycinamidine cyclo-ligase.